The sequence spans 1387 residues: DNA-directed RNA polymerase subunit beta (1387 aa).

This sequence belongs to the RNA polymerase beta chain family. As to quaternary structure, the RNAP catalytic core consists of 2 alpha, 1 beta, 1 beta' and 1 omega subunit. When a sigma factor is associated with the core the holoenzyme is formed, which can initiate transcription.

The catalysed reaction is RNA(n) + a ribonucleoside 5'-triphosphate = RNA(n+1) + diphosphate. Its function is as follows. DNA-dependent RNA polymerase catalyzes the transcription of DNA into RNA using the four ribonucleoside triphosphates as substrates. In Xanthomonas campestris pv. campestris (strain 8004), this protein is DNA-directed RNA polymerase subunit beta.